Here is a 146-residue protein sequence, read N- to C-terminus: Hemoglobin subunit beta (146 aa).

Residues 2 to 146 (HWTAEEKQLI…VAHALARKYH (145 aa)) form the Globin domain. Positions 63 and 92 each coordinate heme b.

This sequence belongs to the globin family. As to quaternary structure, heterotetramer of two alpha chains and two beta chains. As to expression, red blood cells.

In terms of biological role, involved in oxygen transport from the lung to the various peripheral tissues. This is Hemoglobin subunit beta (HBB) from Anas platyrhynchos platyrhynchos (Northern mallard).